Here is a 291-residue protein sequence, read N- to C-terminus: Tyrosine recombinase XerD (291 aa).

Residues 1-82 (MEEGLIDRLL…ACKRLYIWME (82 aa)) form the Core-binding (CB) domain. The region spanning 103–285 (NIPTLITEQQ…ANVWLQGVVK (183 aa)) is the Tyr recombinase domain. Catalysis depends on residues Arg143, Lys167, His237, Arg240, and His263. Tyr272 serves as the catalytic O-(3'-phospho-DNA)-tyrosine intermediate.

This sequence belongs to the 'phage' integrase family. XerD subfamily. Forms a cyclic heterotetrameric complex composed of two molecules of XerC and two molecules of XerD.

The protein resides in the cytoplasm. Functionally, site-specific tyrosine recombinase, which acts by catalyzing the cutting and rejoining of the recombining DNA molecules. The XerC-XerD complex is essential to convert dimers of the bacterial chromosome into monomers to permit their segregation at cell division. It also contributes to the segregational stability of plasmids. In Neisseria meningitidis serogroup B (strain ATCC BAA-335 / MC58), this protein is Tyrosine recombinase XerD.